The primary structure comprises 139 residues: Putative nickel-responsive regulator (139 aa).

Residues histidine 79, histidine 90, histidine 92, and cysteine 98 each coordinate Ni(2+).

Belongs to the transcriptional regulatory CopG/NikR family. The cofactor is Ni(2+).

Its function is as follows. Transcriptional regulator. In Geobacter sp. (strain M21), this protein is Putative nickel-responsive regulator.